Reading from the N-terminus, the 355-residue chain is Uroporphyrinogen decarboxylase (355 aa).

Substrate is bound by residues 27-31, D77, Y154, T209, and H328; that span reads RQAGR.

This sequence belongs to the uroporphyrinogen decarboxylase family. As to quaternary structure, homodimer.

The protein localises to the cytoplasm. The catalysed reaction is uroporphyrinogen III + 4 H(+) = coproporphyrinogen III + 4 CO2. It participates in porphyrin-containing compound metabolism; protoporphyrin-IX biosynthesis; coproporphyrinogen-III from 5-aminolevulinate: step 4/4. Its function is as follows. Catalyzes the decarboxylation of four acetate groups of uroporphyrinogen-III to yield coproporphyrinogen-III. The sequence is that of Uroporphyrinogen decarboxylase from Dechloromonas aromatica (strain RCB).